The following is a 493-amino-acid chain: Glycerol kinase (493 aa).

ADP is bound at residue Thr13. Residues Thr13, Thr14, and Ser15 each contribute to the ATP site. A sn-glycerol 3-phosphate-binding site is contributed by Thr13. Arg17 is a binding site for ADP. Positions 83, 84, 135, and 244 each coordinate sn-glycerol 3-phosphate. The glycerol site is built by Arg83, Glu84, Tyr135, Asp244, and Gln245. Thr266 and Gly309 together coordinate ADP. Positions 266, 309, 313, and 410 each coordinate ATP. ADP-binding residues include Gly410 and Asn414.

This sequence belongs to the FGGY kinase family.

The catalysed reaction is glycerol + ATP = sn-glycerol 3-phosphate + ADP + H(+). It participates in polyol metabolism; glycerol degradation via glycerol kinase pathway; sn-glycerol 3-phosphate from glycerol: step 1/1. Inhibited by fructose 1,6-bisphosphate (FBP). In terms of biological role, key enzyme in the regulation of glycerol uptake and metabolism. Catalyzes the phosphorylation of glycerol to yield sn-glycerol 3-phosphate. The protein is Glycerol kinase of Shewanella piezotolerans (strain WP3 / JCM 13877).